Consider the following 926-residue polypeptide: Alanine--tRNA ligase (926 aa).

Zn(2+) contacts are provided by His615, His619, Cys719, and His723. Positions 887-910 (RVGGGGGGPPDFAQGGGPDADALD) are disordered. Gly residues predominate over residues 888–904 (VGGGGGGPPDFAQGGGP).

This sequence belongs to the class-II aminoacyl-tRNA synthetase family. Zn(2+) is required as a cofactor.

Its subcellular location is the cytoplasm. It carries out the reaction tRNA(Ala) + L-alanine + ATP = L-alanyl-tRNA(Ala) + AMP + diphosphate. Its function is as follows. Catalyzes the attachment of alanine to tRNA(Ala) in a two-step reaction: alanine is first activated by ATP to form Ala-AMP and then transferred to the acceptor end of tRNA(Ala). Also edits incorrectly charged Ser-tRNA(Ala) and Gly-tRNA(Ala) via its editing domain. The sequence is that of Alanine--tRNA ligase from Halorubrum lacusprofundi (strain ATCC 49239 / DSM 5036 / JCM 8891 / ACAM 34).